A 303-amino-acid polypeptide reads, in one-letter code: Cytidine deaminase (303 aa).

2 CMP/dCMP-type deaminase domains span residues 57–172 (TDKE…YLPD) and 196–303 (ITED…IQVS). 98-100 (NQE) is a substrate binding site. A Zn(2+)-binding site is contributed by His111. Glu113 serves as the catalytic Proton donor. Zn(2+)-binding residues include Cys138 and Cys141.

This sequence belongs to the cytidine and deoxycytidylate deaminase family. As to quaternary structure, homodimer. It depends on Zn(2+) as a cofactor.

The enzyme catalyses cytidine + H2O + H(+) = uridine + NH4(+). It carries out the reaction 2'-deoxycytidine + H2O + H(+) = 2'-deoxyuridine + NH4(+). Its function is as follows. This enzyme scavenges exogenous and endogenous cytidine and 2'-deoxycytidine for UMP synthesis. This chain is Cytidine deaminase, found in Histophilus somni (strain 2336) (Haemophilus somnus).